Reading from the N-terminus, the 336-residue chain is 4-aminobenzoate N-oxygenase (336 aa).

Tyrosine 93 is a binding site for 4-nitrobenzoate. Fe cation is bound by residues glutamate 101, glutamate 136, histidine 139, and glutamate 196. Position 200 (asparagine 200) interacts with 4-nitrobenzoate. Fe cation is bound by residues histidine 223, glutamate 227, and histidine 230.

Belongs to the AurF N-oxygenase family. In terms of assembly, homodimer. It depends on Fe(2+) as a cofactor.

It catalyses the reaction 4-aminobenzoate + AH2 + 2 O2 = 4-nitrobenzoate + A + 2 H2O. The protein operates within antibiotic biosynthesis. In terms of biological role, involved in the biosynthesis of the polyketide antibiotic aureothin. Catalyzes the oxidation of p-aminobenzoate (pABA) to p-nitrobenzoate (pNBA), an unusual polyketide synthase starter unit. Reaction mechanism involves the generation of a peroxodiiron(III/III) intermediate, which effects the initial oxidation of p-aminobenzoate to p-hydroxylaminobenzoate (Ar-NHOH). Ar-NHOH is then probably directly converted to the fully oxidized p-nitrobenzoate via a four-electron N-oxidation, bypassing the formation of a nitroso compound. The sequence is that of 4-aminobenzoate N-oxygenase from Streptomyces thioluteus.